The primary structure comprises 524 residues: Probable metalloreductase AIM14 (524 aa).

Transmembrane regions (helical) follow at residues 24–44, 69–89, 104–121, 143–163, 179–199, 206–226, and 230–250; these read VNIK…VLSI, SIPF…LSIF, RLGR…FISL, WISR…LYKW, FLGV…VNVM, LFYI…AFHA, and VPLL…QRFF. Residues 105–222 form the Ferric oxidoreductase domain; that stretch reads LGRMAYCLVP…VTLWMFVVLI (118 aa). Positions 248-372 constitute an FAD-binding FR-type domain; sequence RFFKSYYLHD…GGSGISFGLP (125 aa).

This sequence belongs to the ferric reductase (FRE) family. AIM14 subfamily.

It localises to the membrane. Functionally, probable cell surface metalloreductase. May be involved in iron or copper homeostasis. The sequence is that of Probable metalloreductase AIM14 (AIM14) from Scheffersomyces stipitis (strain ATCC 58785 / CBS 6054 / NBRC 10063 / NRRL Y-11545) (Yeast).